Here is a 588-residue protein sequence, read N- to C-terminus: Pectinesterase 4 (588 aa).

An N-terminal signal peptide occupies residues 1 to 24 (MIGKVVVSVASILLIVGVAIGVVA). N-linked (GlcNAc...) asparagine glycosylation is found at Asn86, Asn206, and Asn342. Thr353 and Gln383 together coordinate substrate. The active-site Proton donor is Asp406. Asp427 functions as the Nucleophile in the catalytic mechanism. Positions 496 and 498 each coordinate substrate.

In the N-terminal section; belongs to the PMEI family. It in the C-terminal section; belongs to the pectinesterase family. In terms of tissue distribution, expressed in pollen grains and pollen tubes.

The protein localises to the secreted. Its subcellular location is the cell wall. It catalyses the reaction [(1-&gt;4)-alpha-D-galacturonosyl methyl ester](n) + n H2O = [(1-&gt;4)-alpha-D-galacturonosyl](n) + n methanol + n H(+). It functions in the pathway glycan metabolism; pectin degradation; 2-dehydro-3-deoxy-D-gluconate from pectin: step 1/5. In terms of biological role, acts in the modification of cell walls via demethylesterification of cell wall pectin. Plays an important role in growth of pollen tubes in female floral tissues, possibly via enhancing the interaction between the pollen tube and female floral tissues by modification of the cell walls. The protein is Pectinesterase 4 (PME4) of Arabidopsis thaliana (Mouse-ear cress).